The chain runs to 407 residues: Putative ammonium transporter MTH_661 (407 aa).

The next 12 membrane-spanning stretches (helical) occupy residues 9–29 (AWML…VAMF), 47–67 (FVSL…LIFG), 70–90 (VSGI…GSAS), 101–121 (FAIF…GAVV), 129–149 (WILF…HWVW), 162–182 (FAGG…LALV), 196–216 (LGYS…FNAG), 226–246 (ANAM…WILM), 257–277 (LGAL…AGFV), 279–299 (IGAS…AVSW), 312–332 (VFGI…LFAV), and 357–377 (IGVV…AMLL).

This sequence belongs to the ammonia transporter channel (TC 1.A.11.2) family.

It is found in the cell membrane. The sequence is that of Putative ammonium transporter MTH_661 from Methanothermobacter thermautotrophicus (strain ATCC 29096 / DSM 1053 / JCM 10044 / NBRC 100330 / Delta H) (Methanobacterium thermoautotrophicum).